A 128-amino-acid chain; its full sequence is L-ectoine synthase (128 aa).

This sequence belongs to the ectoine synthase family.

The enzyme catalyses (2S)-4-acetamido-2-aminobutanoate = L-ectoine + H2O. It participates in amine and polyamine biosynthesis; ectoine biosynthesis; L-ectoine from L-aspartate 4-semialdehyde: step 3/3. Catalyzes the circularization of gamma-N-acetyl-alpha,gamma-diaminobutyric acid (ADABA) to ectoine (1,4,5,6-tetrahydro-2-methyl-4-pyrimidine carboxylic acid), which is an excellent osmoprotectant. This chain is L-ectoine synthase, found in Vibrio atlanticus (strain LGP32) (Vibrio splendidus (strain Mel32)).